The sequence spans 220 residues: Ras-related protein Rab-11B (220 aa).

GTP is bound at residue 18–25 (GDSGVGKS). The short motif at 40–48 (KLSTIGVEF) is the Effector region element. Residues 66 to 70 (DTAGQ) and 124 to 127 (NKSD) each bind GTP. S-geranylgeranyl cysteine attachment occurs at residues Cys219 and Cys220.

This sequence belongs to the small GTPase superfamily. Rab family.

The protein resides in the cell membrane. The sequence is that of Ras-related protein Rab-11B (rab11B) from Dictyostelium discoideum (Social amoeba).